Consider the following 244-residue polypeptide: Membrane-spanning 4-domains subfamily A member 6B (244 aa).

Over 1–46 (MIPQVVTSETVAMISPNGMSLPQTDKPQPFHQWQDSLKKHLKAEIK) the chain is Cytoplasmic. The chain crosses the membrane as a helical span at residues 47 to 67 (VMAAIQIMCAVMVLSLGIILA). Residues 68–84 (SVPSNLHFTSVFSVLLK) are Extracellular-facing. A helical membrane pass occupies residues 85–105 (SGYPFIGALFFIVSGILSIVT). The Cytoplasmic portion of the chain corresponds to 106 to 121 (ETKSTKILVDSSLTLN). A helical membrane pass occupies residues 122 to 142 (ILSVSFAFMGIIIISVSLAGL). Over 143–176 (HPASEQCLQSKELRPTEYHYYQFLDRNECFAAKS) the chain is Extracellular. A helical membrane pass occupies residues 177–197 (VLAGVFSLMLISTMLELGLAV). Residues 198-244 (LTAMLWWKQSHSNIPGNVMFLPHSSNNDSNMESKVLCNPSYEEQLVC) are Cytoplasmic-facing.

It belongs to the MS4A family. As to expression, expressed at high levels in thymus, spleen, and peripheral lymph nodes, with less abundant levels in non-lymphoid tissues.

It localises to the membrane. Its function is as follows. May be involved in signal transduction as a component of a multimeric receptor complex. This Mus musculus (Mouse) protein is Membrane-spanning 4-domains subfamily A member 6B (Ms4a6b).